The following is a 471-amino-acid chain: Glutamate--tRNA ligase (471 aa).

The short motif at 9–19 (PSPTGYLHVGG) is the 'HIGH' region element. Positions 237–241 (KLSKR) match the 'KMSKS' region motif. Lysine 240 serves as a coordination point for ATP.

Belongs to the class-I aminoacyl-tRNA synthetase family. Glutamate--tRNA ligase type 1 subfamily. As to quaternary structure, monomer.

It is found in the cytoplasm. It carries out the reaction tRNA(Glu) + L-glutamate + ATP = L-glutamyl-tRNA(Glu) + AMP + diphosphate. Catalyzes the attachment of glutamate to tRNA(Glu) in a two-step reaction: glutamate is first activated by ATP to form Glu-AMP and then transferred to the acceptor end of tRNA(Glu). This Pectobacterium atrosepticum (strain SCRI 1043 / ATCC BAA-672) (Erwinia carotovora subsp. atroseptica) protein is Glutamate--tRNA ligase.